A 249-amino-acid chain; its full sequence is Coproheme decarboxylase (249 aa).

Fe-coproporphyrin III-binding positions include R131, 145 to 149, H172, Q185, and S223; that span reads YPMDK. The active site involves Y145.

Belongs to the ChdC family. Type 1 subfamily. Fe-coproporphyrin III serves as cofactor.

The enzyme catalyses Fe-coproporphyrin III + 2 H2O2 + 2 H(+) = heme b + 2 CO2 + 4 H2O. It carries out the reaction Fe-coproporphyrin III + H2O2 + H(+) = harderoheme III + CO2 + 2 H2O. It catalyses the reaction harderoheme III + H2O2 + H(+) = heme b + CO2 + 2 H2O. Its pathway is porphyrin-containing compound metabolism; protoheme biosynthesis. Its function is as follows. Involved in coproporphyrin-dependent heme b biosynthesis. Catalyzes the decarboxylation of Fe-coproporphyrin III (coproheme) to heme b (protoheme IX), the last step of the pathway. The reaction occurs in a stepwise manner with a three-propionate intermediate. This chain is Coproheme decarboxylase, found in Halalkalibacterium halodurans (strain ATCC BAA-125 / DSM 18197 / FERM 7344 / JCM 9153 / C-125) (Bacillus halodurans).